The following is a 453-amino-acid chain: CAAX prenyl protease 1 (453 aa).

At 1-12 (MFDLKTILDHPN) the chain is on the lumenal side. A helical membrane pass occupies residues 13-33 (IPWKLIISGFSIAQFSFESYL). At 34–89 (TYRQYQKLSETKLPPVLEDEIDDETFHKSRNYSRAKAKFSIFGDVYNLAQKLVFIK) the chain is on the cytoplasmic side. Residues 90 to 110 (YDLFPKIWHMAVSLLNAVLPV) traverse the membrane as a helical segment. At 111–121 (RFHMVSTVAQS) the chain is on the lumenal side. Residues 122–142 (LCFLGLLSSLSTLVDLPLSYY) form a helical membrane-spanning segment. Residues 143 to 167 (SHFVLEEKFGFNKLTVQLWITDMIK) lie on the Cytoplasmic side of the membrane. Residues 168–188 (SLTLAYAIGGPILYLFLKIFD) form a helical membrane-spanning segment. Over 189–197 (KFPTDFLWY) the chain is Lumenal. The chain crosses the membrane as a helical span at residues 198-218 (IMVFLFVVQILAMTIIPVFIM). Residues 219–306 (PMFNKFTPLE…HEIGHWQKNH (88 aa)) lie on the Cytoplasmic side of the membrane. His297 is a binding site for Zn(2+). Glu298 is a catalytic residue. A Zn(2+)-binding site is contributed by His301. The helical transmembrane segment at 307 to 327 (IVNMVIFSQLHTFLIFSLFTS) threads the bilayer. The Lumenal portion of the chain corresponds to 328 to 357 (IYRNTSFYNTFGFFLEKSTGSFVDPVITKE). A helical transmembrane segment spans residues 358–378 (FPIIIGFMLFNDLLTPLECAM). The Cytoplasmic portion of the chain corresponds to 379–453 (QFVMSLISRT…LDYVSEKKKN (75 aa)). Residue Glu390 coordinates Zn(2+). Catalysis depends on Asp394, which acts as the Proton donor.

The protein belongs to the peptidase M48A family. Zn(2+) is required as a cofactor.

It localises to the endoplasmic reticulum membrane. The enzyme catalyses Hydrolyzes the peptide bond -P2-(S-farnesyl or geranylgeranyl)C-P1'-P2'-P3'-COOH where P1' and P2' are amino acids with aliphatic side chains and P3' is any C-terminal residue.. In terms of biological role, proteolytically removes the C-terminal three residues of farnesylated A-factor mating pheromone. Also acts to cleave the N-terminal extension of the pheromone. Does not act on Ras. The sequence is that of CAAX prenyl protease 1 (STE24) from Saccharomyces cerevisiae (strain ATCC 204508 / S288c) (Baker's yeast).